A 295-amino-acid polypeptide reads, in one-letter code: Ribosomal protein L11 methyltransferase (295 aa).

S-adenosyl-L-methionine-binding residues include T150, G171, D193, and N232.

Belongs to the methyltransferase superfamily. PrmA family.

It is found in the cytoplasm. The enzyme catalyses L-lysyl-[protein] + 3 S-adenosyl-L-methionine = N(6),N(6),N(6)-trimethyl-L-lysyl-[protein] + 3 S-adenosyl-L-homocysteine + 3 H(+). Methylates ribosomal protein L11. The chain is Ribosomal protein L11 methyltransferase from Neisseria meningitidis serogroup B (strain ATCC BAA-335 / MC58).